The sequence spans 915 residues: Isoleucine--tRNA ligase (915 aa).

The 'HIGH' region signature appears at 57–67 (PYANGNLHMGH). Glu-554 serves as a coordination point for L-isoleucyl-5'-AMP. The 'KMSKS' region signature appears at 595-599 (KMSKS). Lys-598 contributes to the ATP binding site. Residues Cys-885, Cys-888, Cys-905, and Cys-908 each contribute to the Zn(2+) site.

This sequence belongs to the class-I aminoacyl-tRNA synthetase family. IleS type 1 subfamily. As to quaternary structure, monomer. The cofactor is Zn(2+).

It localises to the cytoplasm. It carries out the reaction tRNA(Ile) + L-isoleucine + ATP = L-isoleucyl-tRNA(Ile) + AMP + diphosphate. Its function is as follows. Catalyzes the attachment of isoleucine to tRNA(Ile). As IleRS can inadvertently accommodate and process structurally similar amino acids such as valine, to avoid such errors it has two additional distinct tRNA(Ile)-dependent editing activities. One activity is designated as 'pretransfer' editing and involves the hydrolysis of activated Val-AMP. The other activity is designated 'posttransfer' editing and involves deacylation of mischarged Val-tRNA(Ile). This is Isoleucine--tRNA ligase from Staphylococcus carnosus (strain TM300).